The chain runs to 316 residues: UDP-N-acetylenolpyruvoylglucosamine reductase (316 aa).

The FAD-binding PCMH-type domain occupies 27-225 (VGGKAERFYR…KTAINALLKK (199 aa)). Residue Arg190 is part of the active site. Ser239 serves as the catalytic Proton donor. Residue Glu309 is part of the active site.

The protein belongs to the MurB family. The cofactor is FAD.

The protein localises to the cytoplasm. It carries out the reaction UDP-N-acetyl-alpha-D-muramate + NADP(+) = UDP-N-acetyl-3-O-(1-carboxyvinyl)-alpha-D-glucosamine + NADPH + H(+). Its pathway is cell wall biogenesis; peptidoglycan biosynthesis. Functionally, cell wall formation. In Coxiella burnetii (strain CbuK_Q154) (Coxiella burnetii (strain Q154)), this protein is UDP-N-acetylenolpyruvoylglucosamine reductase.